A 224-amino-acid chain; its full sequence is Deoxyribose-phosphate aldolase (224 aa).

Residue D92 is the Proton donor/acceptor of the active site. Catalysis depends on K154, which acts as the Schiff-base intermediate with acetaldehyde. K183 serves as the catalytic Proton donor/acceptor.

This sequence belongs to the DeoC/FbaB aldolase family. DeoC type 1 subfamily.

It is found in the cytoplasm. It catalyses the reaction 2-deoxy-D-ribose 5-phosphate = D-glyceraldehyde 3-phosphate + acetaldehyde. It participates in carbohydrate degradation; 2-deoxy-D-ribose 1-phosphate degradation; D-glyceraldehyde 3-phosphate and acetaldehyde from 2-deoxy-alpha-D-ribose 1-phosphate: step 2/2. Functionally, catalyzes a reversible aldol reaction between acetaldehyde and D-glyceraldehyde 3-phosphate to generate 2-deoxy-D-ribose 5-phosphate. This Actinobacillus succinogenes (strain ATCC 55618 / DSM 22257 / CCUG 43843 / 130Z) protein is Deoxyribose-phosphate aldolase.